We begin with the raw amino-acid sequence, 317 residues long: Melanocyte-stimulating hormone receptor (317 aa).

Over 1-37 (MPVQGSQRRLLGSLNSTPTATPHLGLAANQTGARCLE) the chain is Extracellular. An N-linked (GlcNAc...) asparagine glycan is attached at asparagine 29. A helical transmembrane segment spans residues 38–63 (MSIPDGLFLSLGLVSLVENVLVVTAI). Residues 64–72 (AKNRNLHSP) are Cytoplasmic-facing. Residues 73–93 (MYCFICCLALSDLLVSGSNML) form a helical membrane-spanning segment. Residues 94–118 (ETAVTLLLEAGALAARAAVVQQLDN) lie on the Extracellular side of the membrane. The helical transmembrane segment at 119 to 140 (VIDVITCSSMLSSLCFLGAIAV) threads the bilayer. Over 141-163 (DRYISIFYALRYHSIVTLPRARR) the chain is Cytoplasmic. The helical transmembrane segment at 164–183 (AIAAIWVASVLCSTLFIAYY) threads the bilayer. Residues 184-191 (DHAAVLLC) are Extracellular-facing. Residues 192–211 (LVVFFLAMLVLMAVLYVHML) form a helical membrane-spanning segment. The Cytoplasmic segment spans residues 212-240 (ARACQHAQGIARLHKRQRLAHQGFGLKGA). The helical transmembrane segment at 241–266 (ATLTILLGIFFLCWGPFFLHLTLIVL) threads the bilayer. Topologically, residues 267–279 (CPQHPTCSCIFKN) are extracellular. The chain crosses the membrane as a helical span at residues 280–300 (FNLFLTLIICNAIIDPLIYAF). Over 301 to 317 (RSQELRRTLKEVLLCSW) the chain is Cytoplasmic. Cysteine 315 carries the S-palmitoyl cysteine lipid modification.

It belongs to the G-protein coupled receptor 1 family. Interacts with MGRN1, but does not undergo MGRN1-mediated ubiquitination; this interaction competes with GNAS-binding and thus inhibits agonist-induced cAMP production. Interacts with OPN3; the interaction results in a decrease in MC1R-mediated cAMP signaling and ultimately a decrease in melanin production in melanocytes.

It is found in the cell membrane. Functionally, receptor for MSH (alpha, beta and gamma) and ACTH. The activity of this receptor is mediated by G proteins which activate adenylate cyclase. Mediates melanogenesis, the production of eumelanin (black/brown) and phaeomelanin (red/yellow), via regulation of cAMP signaling in melanocytes. This Macaca nemestrina (Pig-tailed macaque) protein is Melanocyte-stimulating hormone receptor (MC1R).